The primary structure comprises 284 residues: MEMO1 family protein M1425_2054 (284 aa).

The protein belongs to the MEMO1 family.

This is MEMO1 family protein M1425_2054 from Saccharolobus islandicus (strain M.14.25 / Kamchatka #1) (Sulfolobus islandicus).